Reading from the N-terminus, the 399-residue chain is UDP-N-acetylglucosamine--N-acetylmuramyl-(pentapeptide) pyrophosphoryl-undecaprenol N-acetylglucosamine transferase (399 aa).

Residues 1–31 (MTSRFGHSQHPRRGRSARARAGRREGVQSNF) form a disordered region. Basic residues predominate over residues 7–21 (HSQHPRRGRSARARA). Residues 58-60 (TGG), asparagine 170, arginine 206, serine 234, isoleucine 288, and glutamine 333 contribute to the UDP-N-acetyl-alpha-D-glucosamine site.

This sequence belongs to the glycosyltransferase 28 family. MurG subfamily.

The protein localises to the cell inner membrane. The enzyme catalyses di-trans,octa-cis-undecaprenyl diphospho-N-acetyl-alpha-D-muramoyl-L-alanyl-D-glutamyl-meso-2,6-diaminopimeloyl-D-alanyl-D-alanine + UDP-N-acetyl-alpha-D-glucosamine = di-trans,octa-cis-undecaprenyl diphospho-[N-acetyl-alpha-D-glucosaminyl-(1-&gt;4)]-N-acetyl-alpha-D-muramoyl-L-alanyl-D-glutamyl-meso-2,6-diaminopimeloyl-D-alanyl-D-alanine + UDP + H(+). It functions in the pathway cell wall biogenesis; peptidoglycan biosynthesis. In terms of biological role, cell wall formation. Catalyzes the transfer of a GlcNAc subunit on undecaprenyl-pyrophosphoryl-MurNAc-pentapeptide (lipid intermediate I) to form undecaprenyl-pyrophosphoryl-MurNAc-(pentapeptide)GlcNAc (lipid intermediate II). This Acidovorax sp. (strain JS42) protein is UDP-N-acetylglucosamine--N-acetylmuramyl-(pentapeptide) pyrophosphoryl-undecaprenol N-acetylglucosamine transferase.